The primary structure comprises 834 residues: Mannosyl-oligosaccharide glucosidase (834 aa).

The segment covering 1 to 10 (MARGERRRRA) has biased composition (basic residues). Over 1–36 (MARGERRRRAAAAEGARPLERARGAGRRDGRAGGAR) the chain is Cytoplasmic. The tract at residues 1-37 (MARGERRRRAAAAEGARPLERARGAGRRDGRAGGARG) is disordered. An Endoplasmic reticulum targeting motif is present at residues 3–9 (RGERRRR). Residues 17-31 (RPLERARGAGRRDGR) show a composition bias toward basic and acidic residues. Residues 37 to 57 (GSAGGAALAVVVLALAFGLSG) traverse the membrane as a helical; Signal-anchor for type II membrane protein segment. Topologically, residues 58–834 (RWVLAWLGVR…LVLLIMAEEY (777 aa)) are lumenal. The required for endoplasmic reticulum targeting stretch occupies residues 74–136 (PAPSALPPDS…GTPPKLRHTC (63 aa)). The active-site Proton donor is the aspartate 580. N-linked (GlcNAc...) asparagine glycosylation is present at asparagine 654. Glutamate 804 acts as the Proton acceptor in catalysis.

The protein belongs to the glycosyl hydrolase 63 family.

The protein resides in the endoplasmic reticulum membrane. It catalyses the reaction N(4)-(alpha-D-Glc-(1-&gt;2)-alpha-D-Glc-(1-&gt;3)-alpha-D-Glc-(1-&gt;3)-alpha-D-Man-(1-&gt;2)-alpha-D-Man-(1-&gt;2)-alpha-D-Man-(1-&gt;3)-[alpha-D-Man-(1-&gt;2)-alpha-D-Man-(1-&gt;3)-[alpha-D-Man-(1-&gt;2)-alpha-D-Man-(1-&gt;6)]-alpha-D-Man-(1-&gt;6)]-beta-D-Man-(1-&gt;4)-beta-D-GlcNAc-(1-&gt;4)-beta-D-GlcNAc)-L-asparaginyl-[protein] + H2O = N(4)-(alpha-D-Glc-(1-&gt;3)-alpha-D-Glc-(1-&gt;3)-alpha-D-Man-(1-&gt;2)-alpha-D-Man-(1-&gt;2)-alpha-D-Man-(1-&gt;3)-[alpha-D-Man-(1-&gt;2)-alpha-D-Man-(1-&gt;3)-[alpha-D-Man-(1-&gt;2)-alpha-D-Man-(1-&gt;6)]-alpha-D-Man-(1-&gt;6)]-beta-D-Man-(1-&gt;4)-beta-D-GlcNAc-(1-&gt;4)-beta-D-GlcNAc)-L-asparaginyl-[protein] + beta-D-glucose. Its pathway is glycan metabolism; N-glycan degradation. In terms of biological role, in the context of N-glycan degradation, cleaves the distal alpha 1,2-linked glucose residue from the Glc(3)Man(9)GlcNAc(2) oligosaccharide precursor in a highly specific manner. The sequence is that of Mannosyl-oligosaccharide glucosidase from Rattus norvegicus (Rat).